The sequence spans 290 residues: 33 kDa chaperonin (290 aa).

Disulfide bonds link Cys231/Cys233 and Cys263/Cys266.

The protein belongs to the HSP33 family. Post-translationally, under oxidizing conditions two disulfide bonds are formed involving the reactive cysteines. Under reducing conditions zinc is bound to the reactive cysteines and the protein is inactive.

The protein resides in the cytoplasm. Its function is as follows. Redox regulated molecular chaperone. Protects both thermally unfolding and oxidatively damaged proteins from irreversible aggregation. Plays an important role in the bacterial defense system toward oxidative stress. The sequence is that of 33 kDa chaperonin from Thermotoga maritima (strain ATCC 43589 / DSM 3109 / JCM 10099 / NBRC 100826 / MSB8).